The primary structure comprises 304 residues: Aspartate carbamoyltransferase catalytic subunit (304 aa).

R57 and T58 together coordinate carbamoyl phosphate. K86 is an L-aspartate binding site. R107, H135, and Q138 together coordinate carbamoyl phosphate. L-aspartate is bound by residues R168 and R229. Carbamoyl phosphate-binding residues include L266 and P267.

The protein belongs to the aspartate/ornithine carbamoyltransferase superfamily. ATCase family. Heterooligomer of catalytic and regulatory chains.

The enzyme catalyses carbamoyl phosphate + L-aspartate = N-carbamoyl-L-aspartate + phosphate + H(+). The protein operates within pyrimidine metabolism; UMP biosynthesis via de novo pathway; (S)-dihydroorotate from bicarbonate: step 2/3. In terms of biological role, catalyzes the condensation of carbamoyl phosphate and aspartate to form carbamoyl aspartate and inorganic phosphate, the committed step in the de novo pyrimidine nucleotide biosynthesis pathway. This Methanosphaera stadtmanae (strain ATCC 43021 / DSM 3091 / JCM 11832 / MCB-3) protein is Aspartate carbamoyltransferase catalytic subunit.